The following is a 474-amino-acid chain: tRNA-2-methylthio-N(6)-dimethylallyladenosine synthase (474 aa).

The region spanning 3–120 (KKLHIKTWGC…LPDMIEQVRR (118 aa)) is the MTTase N-terminal domain. The [4Fe-4S] cluster site is built by cysteine 12, cysteine 49, cysteine 83, cysteine 157, cysteine 161, and cysteine 164. One can recognise a Radical SAM core domain in the interval 143–375 (RAEGPTAFVS…QDRITQQAMR (233 aa)). The TRAM domain occupies 378–441 (RHMMGTVQRI…TNSLRGKFIR (64 aa)).

This sequence belongs to the methylthiotransferase family. MiaB subfamily. As to quaternary structure, monomer. Requires [4Fe-4S] cluster as cofactor.

Its subcellular location is the cytoplasm. It carries out the reaction N(6)-dimethylallyladenosine(37) in tRNA + (sulfur carrier)-SH + AH2 + 2 S-adenosyl-L-methionine = 2-methylsulfanyl-N(6)-dimethylallyladenosine(37) in tRNA + (sulfur carrier)-H + 5'-deoxyadenosine + L-methionine + A + S-adenosyl-L-homocysteine + 2 H(+). Functionally, catalyzes the methylthiolation of N6-(dimethylallyl)adenosine (i(6)A), leading to the formation of 2-methylthio-N6-(dimethylallyl)adenosine (ms(2)i(6)A) at position 37 in tRNAs that read codons beginning with uridine. This Shewanella sp. (strain MR-4) protein is tRNA-2-methylthio-N(6)-dimethylallyladenosine synthase.